The primary structure comprises 495 residues: Probable cytosol aminopeptidase (495 aa).

Mn(2+) contacts are provided by Lys258 and Asp263. Lys270 is an active-site residue. Mn(2+) is bound by residues Asp281, Asp340, and Glu342. Arg344 is a catalytic residue.

The protein belongs to the peptidase M17 family. The cofactor is Mn(2+).

Its subcellular location is the cytoplasm. It catalyses the reaction Release of an N-terminal amino acid, Xaa-|-Yaa-, in which Xaa is preferably Leu, but may be other amino acids including Pro although not Arg or Lys, and Yaa may be Pro. Amino acid amides and methyl esters are also readily hydrolyzed, but rates on arylamides are exceedingly low.. The enzyme catalyses Release of an N-terminal amino acid, preferentially leucine, but not glutamic or aspartic acids.. Presumably involved in the processing and regular turnover of intracellular proteins. Catalyzes the removal of unsubstituted N-terminal amino acids from various peptides. The sequence is that of Probable cytosol aminopeptidase from Leptospira interrogans serogroup Icterohaemorrhagiae serovar Lai (strain 56601).